The sequence spans 109 residues: Small ribosomal subunit protein bS6 (109 aa).

This sequence belongs to the bacterial ribosomal protein bS6 family.

Binds together with bS18 to 16S ribosomal RNA. The protein is Small ribosomal subunit protein bS6 of Ehrlichia ruminantium (strain Gardel).